We begin with the raw amino-acid sequence, 221 residues long: Protein GrpE 1 (221 aa).

2 disordered regions span residues 1–44 (MTEE…AAAQ) and 192–221 (VAEPQPGAQTVKADEAEAADDKESGGPEEG). Over residues 26–44 (KAAPSEGAAPAGDAAAAAQ) the composition is skewed to low complexity. Residues 203-221 (KADEAEAADDKESGGPEEG) are compositionally biased toward basic and acidic residues.

The protein belongs to the GrpE family. As to quaternary structure, homodimer.

Its subcellular location is the cytoplasm. In terms of biological role, participates actively in the response to hyperosmotic and heat shock by preventing the aggregation of stress-denatured proteins, in association with DnaK and GrpE. It is the nucleotide exchange factor for DnaK and may function as a thermosensor. Unfolded proteins bind initially to DnaJ; upon interaction with the DnaJ-bound protein, DnaK hydrolyzes its bound ATP, resulting in the formation of a stable complex. GrpE releases ADP from DnaK; ATP binding to DnaK triggers the release of the substrate protein, thus completing the reaction cycle. Several rounds of ATP-dependent interactions between DnaJ, DnaK and GrpE are required for fully efficient folding. In Streptomyces avermitilis (strain ATCC 31267 / DSM 46492 / JCM 5070 / NBRC 14893 / NCIMB 12804 / NRRL 8165 / MA-4680), this protein is Protein GrpE 1.